A 278-amino-acid polypeptide reads, in one-letter code: Indole-3-glycerol phosphate synthase (278 aa).

The protein belongs to the TrpC family.

It carries out the reaction 1-(2-carboxyphenylamino)-1-deoxy-D-ribulose 5-phosphate + H(+) = (1S,2R)-1-C-(indol-3-yl)glycerol 3-phosphate + CO2 + H2O. Its pathway is amino-acid biosynthesis; L-tryptophan biosynthesis; L-tryptophan from chorismate: step 4/5. The chain is Indole-3-glycerol phosphate synthase from Pseudomonas aeruginosa (strain LESB58).